Reading from the N-terminus, the 61-residue chain is Metallothionein-1A (61 aa).

Residue Met1 is modified to N-acetylmethionine. The beta stretch occupies residues Met1–Cys29. A divalent metal cation-binding residues include Cys5, Cys7, Cys13, Cys15, Cys19, Cys21, Cys24, Cys26, Cys29, Cys33, Cys34, Cys36, Cys37, Cys41, Cys44, Cys48, Cys50, and Cys57. Residues Lys30–Ala61 are alpha. Position 58 is a phosphoserine (Ser58). Residues Cys59 and Cys60 each coordinate a divalent metal cation.

The protein belongs to the metallothionein superfamily. Type 1 family. Monomer.

Metallothioneins have a high content of cysteine residues that bind various heavy metals; these proteins are transcriptionally regulated by both heavy metals and glucocorticoids. This chain is Metallothionein-1A (MT1A), found in Homo sapiens (Human).